Consider the following 155-residue polypeptide: Small ribosomal subunit protein uS7 (155 aa).

Belongs to the universal ribosomal protein uS7 family. As to quaternary structure, part of the 30S ribosomal subunit. Contacts proteins S9 and S11.

In terms of biological role, one of the primary rRNA binding proteins, it binds directly to 16S rRNA where it nucleates assembly of the head domain of the 30S subunit. Is located at the subunit interface close to the decoding center, probably blocks exit of the E-site tRNA. The chain is Small ribosomal subunit protein uS7 from Xylella fastidiosa (strain M12).